The sequence spans 167 residues: UPF0102 protein RB9115 (167 aa).

It belongs to the UPF0102 family.

This is UPF0102 protein RB9115 from Rhodopirellula baltica (strain DSM 10527 / NCIMB 13988 / SH1).